Here is a 310-residue protein sequence, read N- to C-terminus: tRNA uridine(34) hydroxylase (310 aa).

Residues S124 to S218 enclose the Rhodanese domain. Residue C178 is the Cysteine persulfide intermediate of the active site.

This sequence belongs to the TrhO family.

The catalysed reaction is uridine(34) in tRNA + AH2 + O2 = 5-hydroxyuridine(34) in tRNA + A + H2O. Functionally, catalyzes oxygen-dependent 5-hydroxyuridine (ho5U) modification at position 34 in tRNAs. This is tRNA uridine(34) hydroxylase from Pseudomonas putida (strain ATCC 47054 / DSM 6125 / CFBP 8728 / NCIMB 11950 / KT2440).